A 433-amino-acid polypeptide reads, in one-letter code: Adenylosuccinate synthetase (433 aa).

GTP-binding positions include Gly-11–Lys-17 and Gly-39–Thr-41. Catalysis depends on Asp-12, which acts as the Proton acceptor. The Mg(2+) site is built by Asp-12 and Gly-39. IMP contacts are provided by residues Asp-12–Lys-15, Asn-37–His-40, Thr-134, Arg-148, Asn-230, Thr-245, and Arg-309. His-40 functions as the Proton donor in the catalytic mechanism. Residue Val-305–Arg-311 coordinates substrate. GTP contacts are provided by residues Arg-311, Lys-337–Asp-339, and Gly-419–Gly-421.

It belongs to the adenylosuccinate synthetase family. In terms of assembly, homodimer. Requires Mg(2+) as cofactor.

The protein localises to the cytoplasm. It catalyses the reaction IMP + L-aspartate + GTP = N(6)-(1,2-dicarboxyethyl)-AMP + GDP + phosphate + 2 H(+). The protein operates within purine metabolism; AMP biosynthesis via de novo pathway; AMP from IMP: step 1/2. In terms of biological role, plays an important role in the de novo pathway and in the salvage pathway of purine nucleotide biosynthesis. Catalyzes the first committed step in the biosynthesis of AMP from IMP. The chain is Adenylosuccinate synthetase from Saccharomyces cerevisiae (strain JAY291) (Baker's yeast).